Here is a 293-residue protein sequence, read N- to C-terminus: Glycine--tRNA ligase alpha subunit (293 aa).

It belongs to the class-II aminoacyl-tRNA synthetase family. As to quaternary structure, tetramer of two alpha and two beta subunits.

The protein localises to the cytoplasm. The enzyme catalyses tRNA(Gly) + glycine + ATP = glycyl-tRNA(Gly) + AMP + diphosphate. The sequence is that of Glycine--tRNA ligase alpha subunit from Picosynechococcus sp. (strain ATCC 27264 / PCC 7002 / PR-6) (Agmenellum quadruplicatum).